The chain runs to 260 residues: Thiazole synthase (260 aa).

Catalysis depends on Lys96, which acts as the Schiff-base intermediate with DXP. 1-deoxy-D-xylulose 5-phosphate contacts are provided by residues Gly157, 184 to 185 (AG), and 206 to 207 (NT).

The protein belongs to the ThiG family. As to quaternary structure, homotetramer. Forms heterodimers with either ThiH or ThiS.

It localises to the cytoplasm. It carries out the reaction [ThiS sulfur-carrier protein]-C-terminal-Gly-aminoethanethioate + 2-iminoacetate + 1-deoxy-D-xylulose 5-phosphate = [ThiS sulfur-carrier protein]-C-terminal Gly-Gly + 2-[(2R,5Z)-2-carboxy-4-methylthiazol-5(2H)-ylidene]ethyl phosphate + 2 H2O + H(+). It functions in the pathway cofactor biosynthesis; thiamine diphosphate biosynthesis. Catalyzes the rearrangement of 1-deoxy-D-xylulose 5-phosphate (DXP) to produce the thiazole phosphate moiety of thiamine. Sulfur is provided by the thiocarboxylate moiety of the carrier protein ThiS. In vitro, sulfur can be provided by H(2)S. This chain is Thiazole synthase, found in Bradyrhizobium diazoefficiens (strain JCM 10833 / BCRC 13528 / IAM 13628 / NBRC 14792 / USDA 110).